The primary structure comprises 96 residues: Ribonuclease P protein component 1 (96 aa).

This sequence belongs to the eukaryotic/archaeal RNase P protein component 1 family. In terms of assembly, consists of a catalytic RNA component and at least 4-5 protein subunits.

The protein localises to the cytoplasm. The enzyme catalyses Endonucleolytic cleavage of RNA, removing 5'-extranucleotides from tRNA precursor.. Part of ribonuclease P, a protein complex that generates mature tRNA molecules by cleaving their 5'-ends. The polypeptide is Ribonuclease P protein component 1 (Methanococcus aeolicus (strain ATCC BAA-1280 / DSM 17508 / OCM 812 / Nankai-3)).